The sequence spans 705 residues: Lethal(3)malignant brain tumor-like protein 2 (705 aa).

The tract at residues 1-84 (MEKPPSIEET…GTPRSLDGSG (84 aa)) is disordered. The residue at position 13 (Ser13) is a Phosphoserine. Residues 15 to 25 (PMEEEEDDDLE) are compositionally biased toward acidic residues. Residues 38–49 (SSVGSESSSYLE) show a composition bias toward low complexity. The segment covering 50–60 (ESSEAENEDRE) has biased composition (acidic residues). The residue at position 67 (Ser67) is a Phosphoserine. Thr76 is modified (phosphothreonine). Residues 81–116 (DGSGSEPAVCEMCGIVGTREAFFSKTKRFCSVSCSR) form an FCS-type zinc finger. Zn(2+)-binding residues include Cys90, Cys93, Cys110, and Cys114. MBT repeat units lie at residues 179-283 (FDWG…LVPP), 291-391 (TDWK…IKMS), 397-500 (MAHH…LTPP), and 508-604 (FNWE…LQPP). Ser338 bears the Phosphoserine mark. A Glycyl lysine isopeptide (Lys-Gly) (interchain with G-Cter in SUMO2) cross-link involves residue Lys405. The interval 608 to 705 (EPATPLKAKE…VENIKQETDD (98 aa)) is disordered. Over residues 619 to 634 (TKKKKKQFGKKRKRIP) the composition is skewed to basic residues. Glycyl lysine isopeptide (Lys-Gly) (interchain with G-Cter in SUMO2) cross-links involve residues Lys647, Lys659, and Lys675. Ser683, Ser688, and Ser689 each carry phosphoserine. Lys700 is covalently cross-linked (Glycyl lysine isopeptide (Lys-Gly) (interchain with G-Cter in SUMO1); alternate). Lys700 participates in a covalent cross-link: Glycyl lysine isopeptide (Lys-Gly) (interchain with G-Cter in SUMO2); alternate.

Part of the E2F6.com-1 complex in G0 phase composed of E2F6, MGA, MAX, TFDP1, CBX3, BAT8, EUHMTASE1, RING1, RNF2, MBLR, BAT8 and YAF2.

It localises to the nucleus. Putative Polycomb group (PcG) protein. PcG proteins maintain the transcriptionally repressive state of genes, probably via a modification of chromatin, rendering it heritably changed in its expressibility. Its association with a chromatin-remodeling complex suggests that it may contribute to prevent expression of genes that trigger the cell into mitosis. Binds to monomethylated and dimethylated 'Lys-20' on histone H4. Binds histone H3 peptides that are monomethylated or dimethylated on 'Lys-4', 'Lys-9' or 'Lys-27'. The chain is Lethal(3)malignant brain tumor-like protein 2 (L3MBTL2) from Pongo abelii (Sumatran orangutan).